Reading from the N-terminus, the 675-residue chain is Heat shock 70 kDa protein 12A (675 aa).

Positions 1-45 are disordered; that stretch reads MADKEAGGGDAGPRETAPTSTYSSPARSLGDTGITPLSPSHILND. At Ala2 the chain carries N-acetylalanine. Residues 17–26 show a composition bias toward polar residues; the sequence is APTSTYSSPA.

The protein belongs to the heat shock protein 70 family. As to quaternary structure, interacts with SORL1 (via cytosolic C-terminus); this interaction affects SORL1 internalization and subcellular localization. In terms of tissue distribution, expressed most strongly in brain, kidney and heart with little or no expression in other tissues. In the brain, expressed in glial cells, including astrocytes (at protein level). In the aorta, preferentially expressed in lesions.

Its subcellular location is the cytoplasm. It localises to the nucleus. Adapter protein for SORL1, but not SORT1. Delays SORL1 internalization and affects SORL1 subcellular localization. This is Heat shock 70 kDa protein 12A (Hspa12a) from Mus musculus (Mouse).